The chain runs to 432 residues: Mitochondrial distribution and morphology protein 12 (432 aa).

Residues 1–432 (MSIEVDWRAA…VFPSFWTFLI (432 aa)) enclose the SMP-LTD domain. Disordered regions lie at residues 182-273 (WTDP…PRMR) and 354-377 (QQEARGQDDRPWSSADPTASPKRQ). Low complexity predominate over residues 214–234 (TSNPTSRPSTSSTLPSHPSAS). Basic and acidic residues-rich tracts occupy residues 243-253 (TGKEHGSLAED) and 355-364 (QEARGQDDRP).

This sequence belongs to the MDM12 family. As to quaternary structure, component of the ER-mitochondria encounter structure (ERMES) or MDM complex, composed of mmm1, mdm10, mdm12 and mdm34. A mmm1 homodimer associates with one molecule of mdm12 on each side in a pairwise head-to-tail manner, and the SMP-LTD domains of mmm1 and mdm12 generate a continuous hydrophobic tunnel for phospholipid trafficking.

The protein resides in the mitochondrion outer membrane. The protein localises to the endoplasmic reticulum membrane. Component of the ERMES/MDM complex, which serves as a molecular tether to connect the endoplasmic reticulum (ER) and mitochondria. Components of this complex are involved in the control of mitochondrial shape and protein biogenesis, and function in nonvesicular lipid trafficking between the ER and mitochondria. Mdm12 is required for the interaction of the ER-resident membrane protein MMM1 and the outer mitochondrial membrane-resident beta-barrel protein mdm10. The mdm12-mmm1 subcomplex functions in the major beta-barrel assembly pathway that is responsible for biogenesis of all mitochondrial outer membrane beta-barrel proteins, and acts in a late step after the SAM complex. The mdm10-mdm12-mmm1 subcomplex further acts in the TOM40-specific pathway after the action of the mdm12-mmm1 complex. Essential for establishing and maintaining the structure of mitochondria and maintenance of mtDNA nucleoids. The chain is Mitochondrial distribution and morphology protein 12 from Aspergillus flavus (strain ATCC 200026 / FGSC A1120 / IAM 13836 / NRRL 3357 / JCM 12722 / SRRC 167).